Here is a 173-residue protein sequence, read N- to C-terminus: ATP synthase subunit beta, mitochondrial (173 aa).

It belongs to the ATPase alpha/beta chains family. F-type ATPases have 2 components, CF(1) - the catalytic core - and CF(0) - the membrane proton channel. CF(1) has five subunits: alpha(3), beta(3), gamma(1), delta(1), epsilon(1). CF(0) has three main subunits: a, b and c.

Its subcellular location is the mitochondrion. It localises to the mitochondrion inner membrane. It carries out the reaction ATP + H2O + 4 H(+)(in) = ADP + phosphate + 5 H(+)(out). Its function is as follows. Mitochondrial membrane ATP synthase (F(1)F(0) ATP synthase or Complex V) produces ATP from ADP in the presence of a proton gradient across the membrane which is generated by electron transport complexes of the respiratory chain. F-type ATPases consist of two structural domains, F(1) - containing the extramembraneous catalytic core and F(0) - containing the membrane proton channel, linked together by a central stalk and a peripheral stalk. During catalysis, ATP synthesis in the catalytic domain of F(1) is coupled via a rotary mechanism of the central stalk subunits to proton translocation. Subunits alpha and beta form the catalytic core in F(1). Rotation of the central stalk against the surrounding alpha(3)beta(3) subunits leads to hydrolysis of ATP in three separate catalytic sites on the beta subunits. In Actinidia deliciosa (Kiwi), this protein is ATP synthase subunit beta, mitochondrial (ATPB).